The sequence spans 947 residues: Mitogen-activated protein kinase kinase kinase 14 (947 aa).

Disordered stretches follow at residues 1–37 (MAVM…KKQS) and 135–171 (KGKR…TPEQ). Residues 135-151 (KGKRRSKARKKRKKKSS) show a composition bias toward basic residues. Residues 400-655 (ATHQLRLGRG…ELGGKVNRAL (256 aa)) enclose the Protein kinase domain. The segment at 401–653 (THQLRLGRGS…AAELGGKVNR (253 aa)) is interaction with ZFP91. Residues 406-414 (LGRGSFGEV) and Lys429 each bind ATP. Asp515 serves as the catalytic Proton acceptor. Thr559 is subject to Phosphothreonine. Disordered regions lie at residues 662–766 (KSPW…ATVP) and 805–830 (LSDD…GVHS). Basic and acidic residues predominate over residues 665–674 (WRGEYKEPRH). The segment covering 713-727 (LQPPLPPEPPEPNKS) has biased composition (pro residues). The span at 741 to 752 (EPLPLSSLEPAP) shows a compositional bias: low complexity. Positions 814–829 (SKASQSSRDTLSSGVH) are enriched in polar residues.

It belongs to the protein kinase superfamily. STE Ser/Thr protein kinase family. MAP kinase kinase kinase subfamily. As to quaternary structure, interacts with TRAF2, TRAF5, TRAF6, IKKA and NFKB2/P100. Interacts with TRAF3 and PELI3. Interacts with NIBP; the interaction is direct. Interacts with ARRB1 and ARRB2. Interacts with GRB10. Interacts with ZFP91. Interacts with NLRP12; this interaction promotes proteasomal degradation of MAP3K14. Directly interacts with DDX3X. Interacts (via C-terminus and kinase domain) with PPPC3A (via N-terminus) and PPP3CB. Autophosphorylated. Phosphorylation at Thr-559 is required to activate its kinase activity and 'Lys-63'-linked polyubiquitination. Phosphorylated by CHUK/IKKA leading to MAP3K14 destabilization. In terms of processing, ubiquitinated. Undergoes both 'Lys-48'- and 'Lys-63'-linked polyubiquitination. 'Lys-48'-linked polyubiquitination leads to its degradation by the proteasome, while 'Lys-63'-linked polyubiquitination stabilizes and activates it. In terms of tissue distribution, weakly expressed in testis, small intestine, spleen, thymus, peripheral blood leukocytes, prostate, ovary and colon.

It localises to the cytoplasm. It catalyses the reaction L-seryl-[protein] + ATP = O-phospho-L-seryl-[protein] + ADP + H(+). The catalysed reaction is L-threonyl-[protein] + ATP = O-phospho-L-threonyl-[protein] + ADP + H(+). Lymphotoxin beta-activated kinase which seems to be exclusively involved in the activation of NF-kappa-B and its transcriptional activity. Phosphorylates CHUK/IKKA, thereby promoting proteolytic processing of NFKB2/P100, which leads to NF-kappa-B activation via the non-canonical pathway. Has an essential role in the non-canonical NF-kappa-B signaling that regulates genes encoding molecules involved in B-cell survival, lymphoid organogenesis, and immune response. Could act in a receptor-selective manner. The polypeptide is Mitogen-activated protein kinase kinase kinase 14 (Homo sapiens (Human)).